A 128-amino-acid polypeptide reads, in one-letter code: Large ribosomal subunit protein bL19 (128 aa).

This sequence belongs to the bacterial ribosomal protein bL19 family.

This protein is located at the 30S-50S ribosomal subunit interface and may play a role in the structure and function of the aminoacyl-tRNA binding site. The protein is Large ribosomal subunit protein bL19 of Paraburkholderia xenovorans (strain LB400).